The following is a 66-amino-acid chain: UPF0337 protein M6_Spy1542 (66 aa).

The segment covering 1–10 has biased composition (basic and acidic residues); the sequence is MSEEKLKAKV. The tract at residues 1-22 is disordered; it reads MSEEKLKAKVEQASGSLKEGAG.

This sequence belongs to the UPF0337 (CsbD) family.

In Streptococcus pyogenes serotype M6 (strain ATCC BAA-946 / MGAS10394), this protein is UPF0337 protein M6_Spy1542.